A 458-amino-acid polypeptide reads, in one-letter code: tRNA modification GTPase MnmE (458 aa).

(6S)-5-formyl-5,6,7,8-tetrahydrofolate is bound by residues arginine 23, glutamate 80, and lysine 122. The TrmE-type G domain occupies 218-380; sequence GMKIVIAGRP…LREHLQQTMG (163 aa). Asparagine 228 contacts K(+). GTP contacts are provided by residues 228–233, 247–253, 272–275, and 361–363; these read NVGKSS, TQIPGTT, DTAG, and SAR. Position 232 (serine 232) interacts with Mg(2+). Threonine 247, isoleucine 249, and threonine 252 together coordinate K(+). Threonine 253 is a binding site for Mg(2+). Residue lysine 458 participates in (6S)-5-formyl-5,6,7,8-tetrahydrofolate binding.

The protein belongs to the TRAFAC class TrmE-Era-EngA-EngB-Septin-like GTPase superfamily. TrmE GTPase family. Homodimer. Heterotetramer of two MnmE and two MnmG subunits. The cofactor is K(+).

It localises to the cytoplasm. Functionally, exhibits a very high intrinsic GTPase hydrolysis rate. Involved in the addition of a carboxymethylaminomethyl (cmnm) group at the wobble position (U34) of certain tRNAs, forming tRNA-cmnm(5)s(2)U34. This chain is tRNA modification GTPase MnmE, found in Hamiltonella defensa subsp. Acyrthosiphon pisum (strain 5AT).